A 203-amino-acid polypeptide reads, in one-letter code: Synaptosomal-associated protein 25-B (203 aa).

Basic and acidic residues predominate over residues 1–11; that stretch reads MADEADMRNEL. Residues 1–25 form a disordered region; it reads MADEADMRNELTDMQARADQLGDES. T-SNARE coiled-coil homology domains follow at residues 19–81 and 137–199; these read DQLG…LTDL and DARE…ATKM.

Belongs to the SNAP-25 family.

The protein resides in the synapse. The protein localises to the synaptosome. Its subcellular location is the cell membrane. Its function is as follows. May play an important role in the synaptic function of specific neuronal systems. Associates with proteins involved in vesicle docking and membrane fusion. The polypeptide is Synaptosomal-associated protein 25-B (snap25b) (Carassius auratus (Goldfish)).